The following is a 106-amino-acid chain: Putative double-stranded DNA mimic protein VIBHAR_02752 (106 aa).

This sequence belongs to the putative dsDNA mimic protein family.

Functionally, may act as a double-stranded DNA (dsDNA) mimic. Probably regulates the activity of a dsDNA-binding protein. This chain is Putative double-stranded DNA mimic protein VIBHAR_02752, found in Vibrio campbellii (strain ATCC BAA-1116).